The following is a 491-amino-acid chain: MVFGEFFHRPGQDEELVNLNVGGFKQSVDQSTLLRFPHTRLGKLLTCHSEEAILELCDDYSVADKEYYFDRNPFLFRYVLNFYYTGKLHVMEELCVFSFCQEIEYWGINELFIDSCCSSRYQERKEESHDKDWDQKSNDVSTDSSFEESSLFEKELEKFDELRFGQLRKKIWIRMENPAYCLSAKLIAISSLSVVLASIVAMCVHSMSEFQNEDGEVDDPVLEGVEIACIAWFTGELAIRLVAAPSQKKFWKNPLNIIDFVSIIPFYATLAVDTKEEESEDIENMGKVVQILRLMRIFRILKLARHSVGLRSLGATLRHSYHEVGLLLLFLSVGISIFSVLIYSVEKDEHKSSLTSIPICWWWATISMTTVGYGDTHPVTLAGKIIASTCIICGILVVALPITIIFNKFSKYYQKQKDMEVDQCSEDPPEKCHELPYFNIRDVYAQQVHAFITSLSSIGIVVSDPDSTDASSVEDNEDAYNTASLENCTGK.

Residues M1 to L182 are Cytoplasmic-facing. A helical membrane pass occupies residues S183–V204. The Extracellular portion of the chain corresponds to H205–P220. A helical transmembrane segment spans residues V221–A243. Residues A244–P254 lie on the Cytoplasmic side of the membrane. The chain crosses the membrane as a helical span at residues L255 to K275. At E276–M285 the chain is on the extracellular side. A helical; Voltage-sensor transmembrane segment spans residues G286–H306. Topologically, residues S307–Y321 are cytoplasmic. The helical transmembrane segment at H322 to Y343 threads the bilayer. Residues S344–I357 lie on the Extracellular side of the membrane. The segment at residues P358–T369 is an intramembrane region (helical). The Selectivity filter signature appears at T370 to D375. Residues T370–H377 lie within the membrane without spanning it. Residues P378–K384 are Extracellular-facing. The chain crosses the membrane as a helical span at residues I385–Y413. Residues Q414–K491 are Cytoplasmic-facing.

Belongs to the potassium channel family. S (TC 1.A.1.2) subfamily. Kv9.3/KCNS3 sub-subfamily. As to quaternary structure, heterotetramer with KCNB1. Does not form homomultimers.

It is found in the cell membrane. Its function is as follows. Potassium channel regulatory subunit that modulates the delayed rectifier potassium channel activity of KCNB1 by namely slowing down the deactivation and inactivation time constants. While it does not form functional channel on its own, it can form functional heterotetrameric channels with KCNB1. This is Delayed-rectifier potassium channel regulatory subunit KCNS3 from Mus musculus (Mouse).